The following is a 175-amino-acid chain: Shikimate kinase (175 aa).

Residue 14 to 19 (GAGKST) coordinates ATP. Ser18 is a Mg(2+) binding site. 3 residues coordinate substrate: Asp36, Arg60, and Gly82. Arg120 is a binding site for ATP. Arg140 contributes to the substrate binding site. Gln157 provides a ligand contact to ATP.

Belongs to the shikimate kinase family. As to quaternary structure, monomer. The cofactor is Mg(2+).

It is found in the cytoplasm. The catalysed reaction is shikimate + ATP = 3-phosphoshikimate + ADP + H(+). It participates in metabolic intermediate biosynthesis; chorismate biosynthesis; chorismate from D-erythrose 4-phosphate and phosphoenolpyruvate: step 5/7. Its function is as follows. Catalyzes the specific phosphorylation of the 3-hydroxyl group of shikimic acid using ATP as a cosubstrate. In Actinobacillus succinogenes (strain ATCC 55618 / DSM 22257 / CCUG 43843 / 130Z), this protein is Shikimate kinase.